The chain runs to 305 residues: Ubiquinone biosynthesis protein COQ4 homolog, mitochondrial (305 aa).

Positions 150, 151, 154, and 166 each coordinate Zn(2+).

Belongs to the COQ4 family. In terms of assembly, component of a multi-subunit COQ enzyme complex. Zn(2+) is required as a cofactor.

It localises to the mitochondrion inner membrane. It carries out the reaction a 4-hydroxy-3-methoxy-5-(all-trans-polyprenyl)benzoate + H(+) = a 2-methoxy-6-(all-trans-polyprenyl)phenol + CO2. The protein operates within cofactor biosynthesis; ubiquinone biosynthesis. Functionally, lyase that catalyzes the C1-decarboxylation of 4-hydroxy-3-methoxy-5-(all-trans-polyprenyl)benzoic acid into 2-methoxy-6-(all-trans-polyprenyl)phenol during ubiquinone biosynthesis. This chain is Ubiquinone biosynthesis protein COQ4 homolog, mitochondrial, found in Cryptosporidium parvum (strain Iowa II).